The following is a 698-amino-acid chain: Elongation factor G 1 (698 aa).

One can recognise a tr-type G domain in the interval 8–290 (ERYRNIGICA…AVIEFLPAPV (283 aa)). GTP is bound by residues 17-24 (AHVDAGKT), 88-92 (DTPGH), and 142-145 (NKMD).

It belongs to the TRAFAC class translation factor GTPase superfamily. Classic translation factor GTPase family. EF-G/EF-2 subfamily.

The protein resides in the cytoplasm. Its function is as follows. Catalyzes the GTP-dependent ribosomal translocation step during translation elongation. During this step, the ribosome changes from the pre-translocational (PRE) to the post-translocational (POST) state as the newly formed A-site-bound peptidyl-tRNA and P-site-bound deacylated tRNA move to the P and E sites, respectively. Catalyzes the coordinated movement of the two tRNA molecules, the mRNA and conformational changes in the ribosome. In Aliivibrio fischeri (strain ATCC 700601 / ES114) (Vibrio fischeri), this protein is Elongation factor G 1.